A 125-amino-acid polypeptide reads, in one-letter code: Large ribosomal subunit protein bL12 (125 aa).

It belongs to the bacterial ribosomal protein bL12 family. In terms of assembly, homodimer. Part of the ribosomal stalk of the 50S ribosomal subunit. Forms a multimeric L10(L12)X complex, where L10 forms an elongated spine to which 2 to 4 L12 dimers bind in a sequential fashion. Binds GTP-bound translation factors.

Functionally, forms part of the ribosomal stalk which helps the ribosome interact with GTP-bound translation factors. Is thus essential for accurate translation. In Rickettsia conorii (strain ATCC VR-613 / Malish 7), this protein is Large ribosomal subunit protein bL12.